A 330-amino-acid polypeptide reads, in one-letter code: Phenylalanine--tRNA ligase alpha subunit (330 aa).

A Mg(2+)-binding site is contributed by E246.

This sequence belongs to the class-II aminoacyl-tRNA synthetase family. Phe-tRNA synthetase alpha subunit type 1 subfamily. As to quaternary structure, tetramer of two alpha and two beta subunits. Requires Mg(2+) as cofactor.

It is found in the cytoplasm. The catalysed reaction is tRNA(Phe) + L-phenylalanine + ATP = L-phenylalanyl-tRNA(Phe) + AMP + diphosphate + H(+). In Wolinella succinogenes (strain ATCC 29543 / DSM 1740 / CCUG 13145 / JCM 31913 / LMG 7466 / NCTC 11488 / FDC 602W) (Vibrio succinogenes), this protein is Phenylalanine--tRNA ligase alpha subunit.